The sequence spans 236 residues: 2-C-methyl-D-erythritol 4-phosphate cytidylyltransferase (236 aa).

It belongs to the IspD/TarI cytidylyltransferase family. IspD subfamily.

The catalysed reaction is 2-C-methyl-D-erythritol 4-phosphate + CTP + H(+) = 4-CDP-2-C-methyl-D-erythritol + diphosphate. Its pathway is isoprenoid biosynthesis; isopentenyl diphosphate biosynthesis via DXP pathway; isopentenyl diphosphate from 1-deoxy-D-xylulose 5-phosphate: step 2/6. Its function is as follows. Catalyzes the formation of 4-diphosphocytidyl-2-C-methyl-D-erythritol from CTP and 2-C-methyl-D-erythritol 4-phosphate (MEP). In Pseudomonas syringae pv. syringae (strain B728a), this protein is 2-C-methyl-D-erythritol 4-phosphate cytidylyltransferase.